Consider the following 79-residue polypeptide: Large ribosomal subunit protein bL31 (79 aa).

It belongs to the bacterial ribosomal protein bL31 family. Type A subfamily. As to quaternary structure, part of the 50S ribosomal subunit.

Its function is as follows. Binds the 23S rRNA. The protein is Large ribosomal subunit protein bL31 of Trichormus variabilis (strain ATCC 29413 / PCC 7937) (Anabaena variabilis).